A 233-amino-acid chain; its full sequence is Ribosome-recycling factor, mitochondrial (233 aa).

The protein belongs to the RRF family.

It localises to the mitochondrion. Necessary for protein synthesis in mitochondria. Functions as a ribosome recycling factor in mitochondria. This Candida glabrata (strain ATCC 2001 / BCRC 20586 / JCM 3761 / NBRC 0622 / NRRL Y-65 / CBS 138) (Yeast) protein is Ribosome-recycling factor, mitochondrial (RRF1).